Reading from the N-terminus, the 30-residue chain is MRSYEMNIETAEELSAVNDILASIGEPPVS.

This chain is Tail tubular protein A (11), found in Escherichia coli (Bacteriophage T3).